The primary structure comprises 1040 residues: Eukaryotic translation initiation factor 3 subunit A (1040 aa).

Positions 92–121 (LKKFIELAEKKVTEAQTKADEIQSSLESAA) form a coiled coil. Residues 339–523 (MTKAASFVLL…GVLTFDSDVF (185 aa)) enclose the PCI domain. Positions 608–906 (RVIIEKKKEA…AEARRAARKA (299 aa)) form a coiled coil. Composition is skewed to basic and acidic residues over residues 617–632 (AATDALQRKQREEETR) and 795–901 (EVSE…EARR). 2 disordered regions span residues 617 to 641 (AATDALQRKQREEETRKRIRTQQLQ) and 795 to 1040 (EVSE…QQNQ). Low complexity-rich tracts occupy residues 908-917 (LEPAAPAARP), 945-955 (KEAAGGAAPEA), 978-993 (SGSSAAPAAPPSNGAP), and 1004-1018 (SSSSQPPSRTQTPGS).

This sequence belongs to the eIF-3 subunit A family. Component of the eukaryotic translation initiation factor 3 (eIF-3) complex.

It localises to the cytoplasm. Functionally, RNA-binding component of the eukaryotic translation initiation factor 3 (eIF-3) complex, which is involved in protein synthesis of a specialized repertoire of mRNAs and, together with other initiation factors, stimulates binding of mRNA and methionyl-tRNAi to the 40S ribosome. The eIF-3 complex specifically targets and initiates translation of a subset of mRNAs involved in cell proliferation. The protein is Eukaryotic translation initiation factor 3 subunit A (tif32) of Aspergillus terreus (strain NIH 2624 / FGSC A1156).